Here is a 446-residue protein sequence, read N- to C-terminus: Phosphoglucosamine mutase (446 aa).

S103 functions as the Phosphoserine intermediate in the catalytic mechanism. S103, D242, D244, and D246 together coordinate Mg(2+). S103 is modified (phosphoserine).

The protein belongs to the phosphohexose mutase family. It depends on Mg(2+) as a cofactor. Activated by phosphorylation.

The enzyme catalyses alpha-D-glucosamine 1-phosphate = D-glucosamine 6-phosphate. Functionally, catalyzes the conversion of glucosamine-6-phosphate to glucosamine-1-phosphate. This Vibrio cholerae serotype O1 (strain ATCC 39541 / Classical Ogawa 395 / O395) protein is Phosphoglucosamine mutase.